The primary structure comprises 154 residues: MRVLLQRVSEASVTVDGTLVSSIGQGVLLLVGVRHGDDRATAEWLAHKVAHLRIFEDEAGKMNRSLLDVGGSALVVSQFTLYADVRKGRRPSFIEAAPPNEARPLVDTFAETLRALGVPVETGVFGAHMDVALVNDGPVTIWLDSAELRGGSLD.

Positions 137 to 138 match the Gly-cisPro motif, important for rejection of L-amino acids motif; it reads GP.

Belongs to the DTD family. In terms of assembly, homodimer.

It localises to the cytoplasm. It catalyses the reaction glycyl-tRNA(Ala) + H2O = tRNA(Ala) + glycine + H(+). The enzyme catalyses a D-aminoacyl-tRNA + H2O = a tRNA + a D-alpha-amino acid + H(+). In terms of biological role, an aminoacyl-tRNA editing enzyme that deacylates mischarged D-aminoacyl-tRNAs. Also deacylates mischarged glycyl-tRNA(Ala), protecting cells against glycine mischarging by AlaRS. Acts via tRNA-based rather than protein-based catalysis; rejects L-amino acids rather than detecting D-amino acids in the active site. By recycling D-aminoacyl-tRNA to D-amino acids and free tRNA molecules, this enzyme counteracts the toxicity associated with the formation of D-aminoacyl-tRNA entities in vivo and helps enforce protein L-homochirality. The sequence is that of D-aminoacyl-tRNA deacylase from Thermomicrobium roseum (strain ATCC 27502 / DSM 5159 / P-2).